The primary structure comprises 426 residues: Protein FAM181B (426 aa).

2 disordered regions span residues 106–157 (GLMG…AAAA) and 226–246 (NLPPSFFTEPSRAGGGGCGPS). Low complexity predominate over residues 128–141 (PLAAPSAPTVAAPA).

Belongs to the FAM181 family.

This chain is Protein FAM181B (FAM181B), found in Homo sapiens (Human).